A 414-amino-acid chain; its full sequence is MSRKIQGGSVVEMQGDEMTRIIWELIKEKLILPYVELDLHSYDLGIENRDATNDQVTKDAAEAIKKYNVGVKCATITPDEKRVEEFKLKQMWKSPNGTIRNILGGTVFREAIICKNIPRLVTGWVKPIIIGRHAYGDQYRATDFVVPGPGKVEITYTPKDGTQKVTYMVHDFEEGGGVAMGMYNQDKSIEDFAHSSFQMALSKGWPLYLSTKNTILKKYDGRFKDIFQEIYDKKYKSQFEAQKICYEHRLIDDMVAQAMKSEGGFIWACKNYDGDVQSDSVAQGYGSLGMMTSVLICPDGKTVEAEAAHGTVTRHYRMYQKGQETSTNPIASIFAWSRGLAHRAKLDNNTELSFFAKALEDVCIETIEAGFMTKDLAACIKGLPNVQRSDYLNTFEFMDKLGENLKAKLAQAKL.

At S2 the chain carries N-acetylserine. A Phosphotyrosine modification is found at Y42. Residue T75 to T77 coordinates NADP(+). T77 contacts substrate. The residue at position 81 (K81) is an N6-acetyllysine. R82 is an NADP(+) binding site. Substrate contacts are provided by residues S94–R100 and R109. Position 126 is an N6-succinyllysine (K126). Substrate-binding residues include R132 and K212. Residues K224, K233, and K243 each carry the N6-acetyllysine modification. D252 provides a ligand contact to Mn(2+). K260 lines the NADP(+) pocket. 2 residues coordinate Mn(2+): D275 and D279. Residue G310–H315 coordinates NADP(+). K321 is subject to N6-acetyllysine. Residue N328 coordinates NADP(+). S389 carries the phosphoserine modification. Residue K400 is modified to N6-succinyllysine.

This sequence belongs to the isocitrate and isopropylmalate dehydrogenases family. In terms of assembly, homodimer. Mg(2+) serves as cofactor. Mn(2+) is required as a cofactor. In terms of processing, acetylation at Lys-374 dramatically reduces catalytic activity. In terms of tissue distribution, highly expressed in the liver followed by kidney, lower expression in spleen, brain and lung.

The protein resides in the cytoplasm. It is found in the cytosol. It catalyses the reaction D-threo-isocitrate + NADP(+) = 2-oxoglutarate + CO2 + NADPH. Its activity is regulated as follows. Irreversibly inhibited by Cd(2+) concentrations above 50 uM. Its function is as follows. Catalyzes the NADP(+)-dependent oxidative decarboxylation of isocitrate (D-threo-isocitrate) to 2-ketoglutarate (2-oxoglutarate), which is required by other enzymes such as the phytanoyl-CoA dioxygenase. Plays a critical role in the generation of NADPH, an important cofactor in many biosynthesis pathways. May act as a corneal epithelial crystallin and may be involved in maintaining corneal epithelial transparency. The polypeptide is Isocitrate dehydrogenase [NADP] cytoplasmic (Idh1) (Mus musculus (Mouse)).